A 193-amino-acid polypeptide reads, in one-letter code: 5'RNA triphosphatase A449R (193 aa).

The cofactor is Mn(2+).

The catalysed reaction is a 5'-end triphospho-ribonucleoside in mRNA + H2O = a 5'-end diphospho-ribonucleoside in mRNA + phosphate + H(+). In terms of biological role, catalyzes the first stes of cap formation: by removing the gamma-phosphate from the 5'-triphosphate end of nascent mRNA to yield a diphosphate end. In Chlorella (PBCV-1), this protein is 5'RNA triphosphatase A449R (A449R).